The primary structure comprises 32 residues: Periplasmic [NiFe] hydrogenase small subunit (32 aa).

Residues C17 and C20 each contribute to the [4Fe-4S] cluster site.

The protein belongs to the [NiFe]/[NiFeSe] hydrogenase small subunit family. As to quaternary structure, heterodimer of a large and a small subunit. The cofactor is [3Fe-4S] cluster. [4Fe-4S] cluster serves as cofactor.

It is found in the periplasm. It catalyses the reaction 2 Fe(III)-[cytochrome c3] + H2 = 2 Fe(II)-[cytochrome c3] + 2 H(+). The chain is Periplasmic [NiFe] hydrogenase small subunit (hydA) from Desulfovibrio multispirans.